The primary structure comprises 170 residues: Probable peptide methionine sulfoxide reductase (170 aa).

This sequence belongs to the MsrA Met sulfoxide reductase family.

It is found in the cytoplasm. It localises to the nucleus. The enzyme catalyses L-methionyl-[protein] + [thioredoxin]-disulfide + H2O = L-methionyl-(S)-S-oxide-[protein] + [thioredoxin]-dithiol. It catalyses the reaction [thioredoxin]-disulfide + L-methionine + H2O = L-methionine (S)-S-oxide + [thioredoxin]-dithiol. Has an important function as a repair enzyme for proteins that have been inactivated by oxidation. Catalyzes the reversible oxidation-reduction of methionine sulfoxide in proteins to methionine. The chain is Probable peptide methionine sulfoxide reductase (mxr1) from Schizosaccharomyces pombe (strain 972 / ATCC 24843) (Fission yeast).